The chain runs to 263 residues: Acyl-[acyl-carrier-protein]--UDP-N-acetylglucosamine O-acyltransferase (263 aa).

Belongs to the transferase hexapeptide repeat family. LpxA subfamily. Homotrimer.

It localises to the cytoplasm. It catalyses the reaction a (3R)-hydroxyacyl-[ACP] + UDP-N-acetyl-alpha-D-glucosamine = a UDP-3-O-[(3R)-3-hydroxyacyl]-N-acetyl-alpha-D-glucosamine + holo-[ACP]. It participates in glycolipid biosynthesis; lipid IV(A) biosynthesis; lipid IV(A) from (3R)-3-hydroxytetradecanoyl-[acyl-carrier-protein] and UDP-N-acetyl-alpha-D-glucosamine: step 1/6. Functionally, involved in the biosynthesis of lipid A, a phosphorylated glycolipid that anchors the lipopolysaccharide to the outer membrane of the cell. This is Acyl-[acyl-carrier-protein]--UDP-N-acetylglucosamine O-acyltransferase from Stenotrophomonas maltophilia (strain K279a).